The following is a 419-amino-acid chain: L-2-hydroxyglutarate dehydrogenase, mitochondrial (419 aa).

The transit peptide at 1–51 (MVPALRYLVGACGRARGGFAGDFPGASGLASGRPRPLCGGSRSASTSSFDI) directs the protein to the mitochondrion. 2 positions are modified to N6-acetyllysine: Lys-104 and Lys-173.

This sequence belongs to the L2HGDH family. FAD serves as cofactor.

It localises to the mitochondrion. It catalyses the reaction (S)-2-hydroxyglutarate + A = 2-oxoglutarate + AH2. The sequence is that of L-2-hydroxyglutarate dehydrogenase, mitochondrial (L2HGDH) from Pongo abelii (Sumatran orangutan).